The primary structure comprises 232 residues: Sugar fermentation stimulation protein homolog (232 aa).

This sequence belongs to the SfsA family.

This is Sugar fermentation stimulation protein homolog from Magnetococcus marinus (strain ATCC BAA-1437 / JCM 17883 / MC-1).